A 120-amino-acid polypeptide reads, in one-letter code: U13-lycotoxin-Ls1d (120 aa).

The signal sequence occupies residues 1 to 16 (MKILFVLISILYAVYC). Positions 17–54 (FSSEEDVDSAYLANELEPVEDINSEQYAALEPKEEQER) are excised as a propeptide. 4 disulfide bridges follow: cysteine 56–cysteine 70, cysteine 63–cysteine 76, cysteine 69–cysteine 87, and cysteine 78–cysteine 85. The Agouti domain occupies 56-95 (CADMGQDCKDDCDCCLNIATCNCRFGRYFCSCTFGDYQTC).

This sequence belongs to the neurotoxin 05 (agouti) family. Contains 6 disulfide bonds. As to expression, expressed by the venom gland.

It is found in the secreted. This chain is U13-lycotoxin-Ls1d, found in Lycosa singoriensis (Wolf spider).